The sequence spans 424 residues: Hemagglutinin-esterase (424 aa).

Positions 1 to 16 are cleaved as a signal peptide; the sequence is MFLLPRFVLVSCIIGS. The interval 7–127 is esterase domain 1; that stretch reads FVLVSCIIGS…SNDIWMQNKG (121 aa). Over 17–392 the chain is Virion surface; sequence LGFDNPPTNV…PICVYDPLPI (376 aa). The active-site Nucleophile is S40. Residues C44 and C65 are joined by a disulfide bond. Residues N54, N89, N153, N236, and N301 are each glycosylated (N-linked (GlcNAc...) asparagine; by host). 3 cysteine pairs are disulfide-bonded: C113–C162, C197–C276, and C205–C249. The receptor binding stretch occupies residues 128-266; the sequence is LFYTQVYKNM…GNYLAISNEL (139 aa). The interval 267-379 is esterase domain 2; the sequence is LLTVPTKAIC…RCPTAADINT (113 aa). C307 and C312 are oxidised to a cystine. N-linked (GlcNAc...) asparagine; by host glycosylation is present at N316. Active-site charge relay system residues include D326 and H329. A disulfide bond links C347 and C371. N-linked (GlcNAc...) asparagine; by host glycosylation is present at N358. The chain crosses the membrane as a helical span at residues 393-413; it reads ILLGILLGVAVIIIVVLLLYF. The Intravirion segment spans residues 414-424; that stretch reads MVDNGTRLHDA. Residue N417 is glycosylated (N-linked (GlcNAc...) asparagine; by host).

This sequence belongs to the influenza type C/coronaviruses hemagglutinin-esterase family. Homodimer; disulfide-linked. Forms a complex with the M protein in the pre-Golgi. Associates then with S-M complex to form a ternary complex S-M-HE. Post-translationally, N-glycosylated in the host RER.

Its subcellular location is the virion membrane. It localises to the host cell membrane. The enzyme catalyses N-acetyl-9-O-acetylneuraminate + H2O = N-acetylneuraminate + acetate + H(+). It carries out the reaction N-acetyl-4-O-acetylneuraminate + H2O = N-acetylneuraminate + acetate + H(+). Its function is as follows. Structural protein that makes short spikes at the surface of the virus. Contains receptor binding and receptor-destroying activities. Mediates de-O-acetylation of N-acetyl-4-O-acetylneuraminic acid, which is probably the receptor determinant recognized by the virus on the surface of erythrocytes and susceptible cells. This receptor-destroying activity is important for virus release as it probably helps preventing self-aggregation and ensures the efficient spread of the progeny virus from cell to cell. May serve as a secondary viral attachment protein for initiating infection, the spike protein being the major one. May become a target for both the humoral and the cellular branches of the immune system. The sequence is that of Hemagglutinin-esterase from Bovine coronavirus (strain 98TXSF-110-LUN) (BCoV-LUN).